The following is a 565-amino-acid chain: uncharacterized protein (565 aa).

The next 5 helical transmembrane spans lie at 4 to 26 (FVQF…AVWV), 33 to 55 (GYGL…VGAA), 68 to 90 (SLLY…VNAL), 97 to 119 (YAIL…TQFF), and 162 to 184 (ISAM…IILL). RCK C-terminal domains follow at residues 210–295 (PNVD…LGPE) and 296–379 (VPDA…IFGV). The next 5 membrane-spanning stretches (helical) occupy residues 389-411 (LLTL…PAFG), 415-432 (GLGN…VSSI), 453-472 (LGLI…DLLT), 482-504 (IFIV…GFHI), and 539-561 (WLGF…YFAM).

This sequence belongs to the AAE transporter (TC 2.A.81) family.

It is found in the cell membrane. This is an uncharacterized protein from Bordetella parapertussis (strain 12822 / ATCC BAA-587 / NCTC 13253).